Reading from the N-terminus, the 205-residue chain is Ribosomal RNA small subunit methyltransferase J (205 aa).

S-adenosyl-L-methionine is bound by residues arginine 56–aspartate 57, glutamate 72–arginine 73, and aspartate 124.

The protein belongs to the methyltransferase superfamily. RsmJ family.

Its subcellular location is the cytoplasm. It carries out the reaction guanosine(1516) in 16S rRNA + S-adenosyl-L-methionine = N(2)-methylguanosine(1516) in 16S rRNA + S-adenosyl-L-homocysteine + H(+). Functionally, specifically methylates the guanosine in position 1516 of 16S rRNA. In Brucella anthropi (strain ATCC 49188 / DSM 6882 / CCUG 24695 / JCM 21032 / LMG 3331 / NBRC 15819 / NCTC 12168 / Alc 37) (Ochrobactrum anthropi), this protein is Ribosomal RNA small subunit methyltransferase J.